We begin with the raw amino-acid sequence, 152 residues long: Ribosome maturation factor RimP (152 aa).

This sequence belongs to the RimP family.

Its subcellular location is the cytoplasm. Its function is as follows. Required for maturation of 30S ribosomal subunits. The protein is Ribosome maturation factor RimP of Yersinia pestis.